Here is a 158-residue protein sequence, read N- to C-terminus: NAD(P)H-quinone oxidoreductase subunit J, chloroplastic (158 aa).

It belongs to the complex I 30 kDa subunit family. As to quaternary structure, NDH is composed of at least 16 different subunits, 5 of which are encoded in the nucleus.

Its subcellular location is the plastid. It localises to the chloroplast thylakoid membrane. It catalyses the reaction a plastoquinone + NADH + (n+1) H(+)(in) = a plastoquinol + NAD(+) + n H(+)(out). It carries out the reaction a plastoquinone + NADPH + (n+1) H(+)(in) = a plastoquinol + NADP(+) + n H(+)(out). In terms of biological role, NDH shuttles electrons from NAD(P)H:plastoquinone, via FMN and iron-sulfur (Fe-S) centers, to quinones in the photosynthetic chain and possibly in a chloroplast respiratory chain. The immediate electron acceptor for the enzyme in this species is believed to be plastoquinone. Couples the redox reaction to proton translocation, and thus conserves the redox energy in a proton gradient. The chain is NAD(P)H-quinone oxidoreductase subunit J, chloroplastic from Jasminum nudiflorum (Winter jasmine).